The sequence spans 29 residues: Potassium-transporting ATPase KdpF subunit (29 aa).

The helical transmembrane segment at 2-22 (LIGEAVLAVVTVAVVAYLTYV) threads the bilayer.

The protein belongs to the KdpF family. The system is composed of three essential subunits: KdpA, KdpB and KdpC. The complex also contains KdpF, a small non-essential subunit.

The protein resides in the cell membrane. Its function is as follows. Part of the high-affinity ATP-driven potassium transport (or Kdp) system, which catalyzes the hydrolysis of ATP coupled with the electrogenic transport of potassium into the cytoplasm. This subunit may be involved in stabilization of the complex. The Kdp system is essential for growth under K(+) limitation, and for survival under desiccation and salt crystal inclusion. The polypeptide is Potassium-transporting ATPase KdpF subunit (Halobacterium salinarum (strain ATCC 29341 / DSM 671 / R1)).